The following is a 465-amino-acid chain: uncharacterized protein (465 aa).

Disordered regions lie at residues 95–173 (STST…RKDP), 407–426 (QEMEGKRNESKSDDEGKSDK), and 443–465 (ANPIETARMARRNRRSKGSSSKK). Residues 118–137 (KTGSKKVTRSKKSKKTKRRS) show a composition bias toward basic residues. Over residues 138–150 (STTVTTTTISNSK) the composition is skewed to low complexity. Residues 153–173 (TPDKDKDSKDQRKQRTKRKDP) are compositionally biased toward basic and acidic residues. A compositionally biased stretch (basic residues) spans 451-465 (MARRNRRSKGSSSKK).

This is an uncharacterized protein from Caenorhabditis elegans.